We begin with the raw amino-acid sequence, 291 residues long: GTPase Era (291 aa).

An Era-type G domain is found at 2–167 (KSGFVSIIGR…LDEIVKYLDK (166 aa)). A G1 region spans residues 10–17 (GRTNAGKS). Residue 10–17 (GRTNAGKS) participates in GTP binding. The tract at residues 36–40 (NATRR) is G2. The segment at 57 to 60 (DTPG) is G3. GTP contacts are provided by residues 57-61 (DTPGL) and 116-119 (NKVD). Positions 116-119 (NKVD) are G4. Residues 146–148 (YSS) form a G5 region. Positions 186–274 (YRDFILESIY…LLKLFVTVKK (89 aa)) constitute a KH type-2 domain.

The protein belongs to the TRAFAC class TrmE-Era-EngA-EngB-Septin-like GTPase superfamily. Era GTPase family. Monomer.

The protein resides in the cytoplasm. It localises to the cell inner membrane. An essential GTPase that binds both GDP and GTP, with rapid nucleotide exchange. Plays a role in 16S rRNA processing and 30S ribosomal subunit biogenesis and possibly also in cell cycle regulation and energy metabolism. This chain is GTPase Era, found in Campylobacter jejuni subsp. jejuni serotype O:6 (strain 81116 / NCTC 11828).